Reading from the N-terminus, the 286-residue chain is NAD kinase (286 aa).

Residue Asp-74 is the Proton acceptor of the active site. NAD(+) is bound by residues 74–75, 148–149, Asp-178, Ala-186, 189–194, and Gln-244; these read DG, ND, and TAYNLS.

It belongs to the NAD kinase family. A divalent metal cation is required as a cofactor.

The protein resides in the cytoplasm. It catalyses the reaction NAD(+) + ATP = ADP + NADP(+) + H(+). Functionally, involved in the regulation of the intracellular balance of NAD and NADP, and is a key enzyme in the biosynthesis of NADP. Catalyzes specifically the phosphorylation on 2'-hydroxyl of the adenosine moiety of NAD to yield NADP. In Campylobacter jejuni subsp. doylei (strain ATCC BAA-1458 / RM4099 / 269.97), this protein is NAD kinase.